The primary structure comprises 238 residues: Transcription termination/antitermination protein NusG (238 aa).

Belongs to the NusG family.

Its function is as follows. Participates in transcription elongation, termination and antitermination. The protein is Transcription termination/antitermination protein NusG of Mycobacterium tuberculosis (strain CDC 1551 / Oshkosh).